A 261-amino-acid polypeptide reads, in one-letter code: Endonuclease NucS (261 aa).

This sequence belongs to the NucS endonuclease family.

It is found in the cytoplasm. In terms of biological role, cleaves both 3' and 5' ssDNA extremities of branched DNA structures. The polypeptide is Endonuclease NucS (Aeropyrum pernix (strain ATCC 700893 / DSM 11879 / JCM 9820 / NBRC 100138 / K1)).